Consider the following 453-residue polypeptide: Homogentisate 1,2-dioxygenase (453 aa).

Positions 1 to 12 are enriched in basic and acidic residues; that stretch reads MLEKAERQRKAA. The disordered stretch occupies residues 1-43; it reads MLEKAERQRKAAPDQQRSAGYMPGFGNDFETESLPGSLPQGQN. His306 functions as the Proton acceptor in the catalytic mechanism. Positions 349 and 355 each coordinate Fe cation. Homogentisate-binding residues include Tyr364 and His385. Fe cation is bound at residue His385.

It belongs to the homogentisate dioxygenase family. As to quaternary structure, hexamer; dimer of trimers. Requires Fe cation as cofactor.

The catalysed reaction is homogentisate + O2 = 4-maleylacetoacetate + H(+). It functions in the pathway amino-acid degradation; L-phenylalanine degradation; acetoacetate and fumarate from L-phenylalanine: step 4/6. Functionally, involved in the catabolism of homogentisate (2,5-dihydroxyphenylacetate or 2,5-OH-PhAc), a central intermediate in the degradation of phenylalanine and tyrosine. Catalyzes the oxidative ring cleavage of the aromatic ring of homogentisate to yield maleylacetoacetate. This chain is Homogentisate 1,2-dioxygenase, found in Sinorhizobium medicae (strain WSM419) (Ensifer medicae).